Consider the following 607-residue polypeptide: Potassium transporter KimA (607 aa).

The Cytoplasmic segment spans residues 1-30 (MYHSIKRFLIGKPLKSQAAGEQKLTKLKAL). A helical membrane pass occupies residues 31 to 49 (AMLSSDALSSVAYGTEQIL). 2 residues coordinate K(+): aspartate 36 and tyrosine 43. The Extracellular portion of the chain corresponds to 50–62 (IILATISAAAFWY). The helical transmembrane segment at 63–84 (SIPIAVGVLILLLALILSYRQI) threads the bilayer. Topologically, residues 85–105 (IYAYPQGGGAYIVSKENLGEK) are cytoplasmic. A helical transmembrane segment spans residues 106 to 134 (PGLIAGGSLLVDYILTVAVSISAGTDAIT). 2 residues coordinate K(+): aspartate 117 and serine 125. The Extracellular segment spans residues 135-142 (SAFPALHD). A helical transmembrane segment spans residues 143 to 162 (YHVPIAIFLVLVIMILNLRG). Topologically, residues 163-166 (LSES) are cytoplasmic. The helical transmembrane segment at 167-190 (ASILAYPVYLFVVALLVLIAVGLF) threads the bilayer. At 191–214 (KLMTGQIDQPAHHTSLGTPVAGIT) the chain is on the extracellular side. A helical membrane pass occupies residues 215-238 (LFLLLKAFSSGCSALTGVEAISNA). Residues 239–249 (IPAFKNPPARN) are Cytoplasmic-facing. Residues 250-271 (AARTLAMMGILLAILFSGITVL) traverse the membrane as a helical segment. Residues 272–298 (AYGYGTAPKPDETVVSQIASETFGRNV) lie on the Extracellular side of the membrane. The helical transmembrane segment at 299 to 323 (FYYVIQGVTSLILVLAANTGFSAFP) threads the bilayer. The Cytoplasmic portion of the chain corresponds to 324 to 347 (QLAFNLARDQYMPRMFTVRGDRLG). Residues 348-366 (FSNGIIFLGFASIVLIILF) traverse the membrane as a helical segment. Topologically, residues 367–372 (GGQTEH) are extracellular. Residues 373–393 (LIPLYAVGVFIPFTLSQTGMC) form a helical membrane-spanning segment. At 394-405 (MKWIKQKPKGWI) the chain is on the cytoplasmic side. A helical membrane pass occupies residues 406–428 (GKMLINSCGALISFMVLSILFVT). The Extracellular segment spans residues 429–431 (KFN). A helical membrane pass occupies residues 432–447 (VVWPVLIFMPIVVLLF). Residues 448–607 (FAIKNHYTAV…VATLPYHFKK (160 aa)) lie on the Cytoplasmic side of the membrane.

Belongs to the amino acid-polyamine-organocation (APC) superfamily. As to quaternary structure, homodimer.

The protein localises to the cell membrane. The enzyme catalyses K(+)(in) + H(+)(in) = K(+)(out) + H(+)(out). Its activity is regulated as follows. Potassium uptake increases at lower external pH and is abolished by the proton ionophore carbonyl cyanide m-chlorophenylhydrazone (CCCP). Binds cyclic di-AMP (c-di-AMP), which inhibits the potassium transport activity. Its function is as follows. High-affinity potassium transporter. Functions as a K(+)/H(+) symporter. This chain is Potassium transporter KimA, found in Bacillus subtilis (strain 168).